A 128-amino-acid polypeptide reads, in one-letter code: MKTLALDIGLKRIGVALCVNKSIAMPLEAIIRKNRNQAANEVKKYIKEYDVNTLVVGVPLGGSSEDEMRKRVEHFISLLDFDKEVFFVDESFSSKNAQELGMVNLKKKDGKLDSLAAYLFLKDFYGLT.

Belongs to the YqgF nuclease family.

Its subcellular location is the cytoplasm. Its function is as follows. Could be a nuclease involved in processing of the 5'-end of pre-16S rRNA. This chain is Putative pre-16S rRNA nuclease, found in Campylobacter lari (strain RM2100 / D67 / ATCC BAA-1060).